The primary structure comprises 202 residues: Zinc metalloproteinase barnettlysin-1 (202 aa).

The Peptidase M12B domain maps to 6–200; sequence RYVELFIVVD…MKENPQCILN (195 aa). Ca(2+) is bound by residues Glu9 and Asp93. Cystine bridges form between Cys117/Cys197, Cys157/Cys181, and Cys159/Cys164. Zn(2+) is bound at residue His142. Glu143 is a catalytic residue. 2 residues coordinate Zn(2+): His146 and His152. Residues Cys197 and Asn200 each contribute to the Ca(2+) site.

As to quaternary structure, monomer. Zn(2+) serves as cofactor. Expressed by the venom gland.

It localises to the secreted. Non-hemorrhagic metalloproteinase that hydrolyzes the alpha chains of fibrinogen and fibrin but has no activity on beta- and gamma-chains. Cleaves X-Leu bonds. Inhibits platelet aggregation induced by the von Willebrand factor (VWF) (IC(50) is 1.4 uM) and type I collagen (IC(50) is 3.2 uM). Acts by cleaving the vWF and its receptor GPIb, and by cleaving the collagen-binding Alpha-2A domain of the collagen receptor alpha-2/beta-1 integrin (ITGA2/ITGB1). Also degrades the extracellular matrix protein fibronectin (FN1), but has no effect on laminin and type I collagen. The chain is Zinc metalloproteinase barnettlysin-1 from Bothrops barnetti (Barnett's lancehead).